The primary structure comprises 79 residues: Phosphoribosylformylglycinamidine synthase subunit PurS (79 aa).

Belongs to the PurS family. In terms of assembly, homodimer. Part of the FGAM synthase complex composed of 1 PurL, 1 PurQ and 2 PurS subunits.

It is found in the cytoplasm. The enzyme catalyses N(2)-formyl-N(1)-(5-phospho-beta-D-ribosyl)glycinamide + L-glutamine + ATP + H2O = 2-formamido-N(1)-(5-O-phospho-beta-D-ribosyl)acetamidine + L-glutamate + ADP + phosphate + H(+). It participates in purine metabolism; IMP biosynthesis via de novo pathway; 5-amino-1-(5-phospho-D-ribosyl)imidazole from N(2)-formyl-N(1)-(5-phospho-D-ribosyl)glycinamide: step 1/2. Its function is as follows. Part of the phosphoribosylformylglycinamidine synthase complex involved in the purines biosynthetic pathway. Catalyzes the ATP-dependent conversion of formylglycinamide ribonucleotide (FGAR) and glutamine to yield formylglycinamidine ribonucleotide (FGAM) and glutamate. The FGAM synthase complex is composed of three subunits. PurQ produces an ammonia molecule by converting glutamine to glutamate. PurL transfers the ammonia molecule to FGAR to form FGAM in an ATP-dependent manner. PurS interacts with PurQ and PurL and is thought to assist in the transfer of the ammonia molecule from PurQ to PurL. The protein is Phosphoribosylformylglycinamidine synthase subunit PurS of Mycobacterium leprae (strain TN).